The primary structure comprises 657 residues: Threonine--tRNA ligase (657 aa).

Residues 1-70 (MSDHKESTGA…NSDAAIEIIT (70 aa)) form the TGS domain. Positions 253–555 (DHRKLGAELE…LIEHTAGNFP (303 aa)) are catalytic. 3 residues coordinate Zn(2+): Cys-351, His-402, and His-532.

This sequence belongs to the class-II aminoacyl-tRNA synthetase family. In terms of assembly, homodimer. It depends on Zn(2+) as a cofactor.

Its subcellular location is the cytoplasm. The enzyme catalyses tRNA(Thr) + L-threonine + ATP = L-threonyl-tRNA(Thr) + AMP + diphosphate + H(+). Its function is as follows. Catalyzes the attachment of threonine to tRNA(Thr) in a two-step reaction: L-threonine is first activated by ATP to form Thr-AMP and then transferred to the acceptor end of tRNA(Thr). Also edits incorrectly charged L-seryl-tRNA(Thr). In Chlorobium chlorochromatii (strain CaD3), this protein is Threonine--tRNA ligase.